The chain runs to 454 residues: UPF0210 protein Mhun_2657 (454 aa).

It belongs to the UPF0210 family.

In Methanospirillum hungatei JF-1 (strain ATCC 27890 / DSM 864 / NBRC 100397 / JF-1), this protein is UPF0210 protein Mhun_2657.